The sequence spans 257 residues: Spermidine/putrescine transport system permease protein PotC (257 aa).

Topologically, residues 1–7 are cytoplasmic; the sequence is MSRFFLR. Residues 8–27 traverse the membrane as a helical segment; that stretch reads NAFMFVVYAYLYIPIIILVT. The Periplasmic segment spans residues 28-65; the sequence is NSFNKDRYGLSWKGFSWNWYERLFNNDTLIQAAIHSVT. The ABC transmembrane type-1 domain maps to 60-248; the sequence is AIHSVTIAFF…VLSLALVVLS (189 aa). Residues 66–85 traverse the membrane as a helical segment; it reads IAFFAATLATIVGGLTAIAL. At 86 to 100 the chain is on the cytoplasmic side; that stretch reads YRYRFRGKQAVSGML. A helical membrane pass occupies residues 101 to 120; that stretch reads FIVMMSPDIVMAVSLLALFM. Topologically, residues 121–128 are periplasmic; it reads VVGISLGF. A helical membrane pass occupies residues 129-148; that stretch reads WSLLLAHVTFCLPYVTVTIF. Over 149–176 the chain is Cytoplasmic; it reads SRLNGFDSRMLEAAKDLGASEVTILRKI. The helical transmembrane segment at 177 to 196 threads the bilayer; it reads ILPLALPAVVSGWLLSFTIS. Residues 197–231 are Periplasmic-facing; that stretch reads LDDVVVSSFVSGVSYEILPLRIFSLVKTGVTPEVN. A helical membrane pass occupies residues 232-251; sequence ALATIMIVLSLALVVLSQLI. Residues 252 to 257 lie on the Cytoplasmic side of the membrane; that stretch reads TRKNNH.

The protein belongs to the binding-protein-dependent transport system permease family. CysTW subfamily.

Its subcellular location is the cell inner membrane. Its function is as follows. Required for the activity of the bacterial periplasmic transport system of putrescine and spermidine. In Haemophilus influenzae (strain ATCC 51907 / DSM 11121 / KW20 / Rd), this protein is Spermidine/putrescine transport system permease protein PotC (potC).